Here is a 258-residue protein sequence, read N- to C-terminus: tRNA pseudouridine synthase A (258 aa).

The active-site Nucleophile is Asp-52. Tyr-110 is a substrate binding site.

This sequence belongs to the tRNA pseudouridine synthase TruA family. As to quaternary structure, homodimer.

The enzyme catalyses uridine(38/39/40) in tRNA = pseudouridine(38/39/40) in tRNA. Formation of pseudouridine at positions 38, 39 and 40 in the anticodon stem and loop of transfer RNAs. The sequence is that of tRNA pseudouridine synthase A from Francisella tularensis subsp. novicida (strain U112).